The sequence spans 1464 residues: MDAAAEMQKVVSLRRGGGGSSSRGAASMWWSADNGVFSRSRASSSGEDGEDDEEALRWAALEKLPTYDRVRRAVLPVVEEGGGGGEAGKKVVDVLSLGPQERRALLERLVRVAEDDNERFLLKLKERIDRVGIDIPTIEVRFEHLEAEAEVRVGNSGLPTVLNSMTNKLEGAANALGILPNKKQTMPILHDVSGIVKPRRMTLLLGPPGSGKTTLLLALAGRLGKDIKFSGQVTYNGHQMEDFVPQRTAAYISQHDLHIGEMTVRETLSFSARCQGVGSRFDMLTELSRREKAANIKPDADIDAFMKASAMEGQETNLITDYILKILGLDICADTMVGDDMVRGISGGQRKRVTTGEMLVGPANALFMDEISTGLDSSTTFQIVKSLRQAIHILGGTAVISLLQPAPETYDLFDDIILLSDGQIVYQGPREGVLEFFELMGFKCPERKGVADFLQEVTSRKDQKQYWMQHDKPYRYVPVKDFASAFQSFHTGKSIANELATPFDKSKNHPAALTTSRYGVSAMELLKANIDREFLLMKRNSFVYIFRACQLMVVSAIAMTVFFRTKMHRDSVTDGVIFMGALFFSVMMIMFNGLSELPLTIFKLPVFFKQRDLLFFPAWTYTIPSWILKIPMSFIEVGGFVFMSYYVIGFDPSAGRFFKQYLLMLAINQMAAALFRFVGGAARNMIVANVFGSFMLLIFMVLGGFILVREKVKKWWIWGYWISPMMYAQNAISVNEFLGHSWDKVLNNSLSNETLGVQALRSRGVFPEAKWYWIGFGALLGFIMLFNGLFTLALTYLKPYGKSQPSVSEEELKEKQANINGNVLDVDTMASSTNLAIVDNTETSSEIADNSQPTQRGMVLPFAPLSLTFDNIKYSVDMPQEMKAHGIVEDRLELLKGVSGSFRPGVLTALMGVSGAGKTTLMDVLAGRKTGGYIEGNITISGYPKKQETFARVSGYCEQNDIHSPQVTVSESLLFSAWLRLPKDVDSNTRKMFIEEVMELVELKPLRDALVGLPGVNGLSTEQRKRLTIAVELVANPSIIFMDEPTSGLDARAAAIVMRTVRNTVDTGRTVVCTIHQPSIDIFEAFDELFLMKRGGEEIYVGPLGHQSSELIKYFEGIKGVSRIKDGYNPATWMLEVSTISQEQALGVDFCDIYRKSELFQRNKALIQELSTPPPGSSELYFPTKYSLSFLNQCLACLWKMHLSYWRNPPYNAIRLFFTTVIALLFGTIFWDLGGKTGKSQDLFNAMGSMYSAVLFIGVLNSQSVQPVVSVERTVFYRERAAGMYSAFPYAFGQVAIEFPYTLVQSIIYGIIVYSMIGFKWTAAKFFWYLFFMFFTFLYFTFYGMMAVGLTPSYHVASIVSSAFYGIWNLFSGFIIPRPKVPIWWRWYCWICPVAWTLYGLVASQFGDIMTPMDDGTPVKIFVENYFDFKHSWLGVVAVVIVAFTMLFAFLFGFAIMKLNFQKR.

Residues 1–26 (MDAAAEMQKVVSLRRGGGGSSSRGAA) are disordered. Residues 173-446 (ANALGILPNK…FELMGFKCPE (274 aa)) form the ABC transporter 1 domain. Residue 206–213 (GPPGSGKT) coordinates ATP. The 214-residue stretch at 524 to 737 (ELLKANIDRE…AQNAISVNEF (214 aa)) folds into the ABC transmembrane type-2 1 domain. The next 7 membrane-spanning stretches (helical) occupy residues 542-562 (FVYI…MTVF), 575-595 (GVIF…NGLS), 630-650 (IPMS…VIGF), 662-682 (LLML…GGAA), 686-706 (IVAN…GGFI), 715-735 (WWIW…ISVN), and 774-794 (IGFG…TLAL). An ABC transporter 2 domain is found at 867–1119 (LTFDNIKYSV…ELIKYFEGIK (253 aa)). 912-919 (GVSGAGKT) is a binding site for ATP. An ABC transmembrane type-2 2 domain is found at 1192–1406 (NQCLACLWKM…TLYGLVASQF (215 aa)). A run of 7 helical transmembrane segments spans residues 1213-1233 (AIRL…FWDL), 1243-1263 (LFNA…LNSQ), 1299-1319 (FPYT…MIGF), 1326-1346 (FFWY…YGMM), 1356-1376 (VASI…GFII), 1387-1407 (WYCW…SQFG), and 1436-1456 (VVAV…GFAI).

Belongs to the ABC transporter superfamily. ABCG family. PDR (TC 3.A.1.205) subfamily.

It localises to the membrane. Functionally, may be a general defense protein. This Oryza sativa subsp. japonica (Rice) protein is ABC transporter G family member 35.